The following is a 320-amino-acid chain: Acetyl-coenzyme A carboxylase carboxyl transferase subunit alpha (320 aa).

One can recognise a CoA carboxyltransferase C-terminal domain in the interval 42–295 (IEDKAKAALH…GDAIAQAFSD (254 aa)).

This sequence belongs to the AccA family. In terms of assembly, acetyl-CoA carboxylase is a heterohexamer composed of biotin carboxyl carrier protein (AccB), biotin carboxylase (AccC) and two subunits each of ACCase subunit alpha (AccA) and ACCase subunit beta (AccD).

It is found in the cytoplasm. It carries out the reaction N(6)-carboxybiotinyl-L-lysyl-[protein] + acetyl-CoA = N(6)-biotinyl-L-lysyl-[protein] + malonyl-CoA. The protein operates within lipid metabolism; malonyl-CoA biosynthesis; malonyl-CoA from acetyl-CoA: step 1/1. Functionally, component of the acetyl coenzyme A carboxylase (ACC) complex. First, biotin carboxylase catalyzes the carboxylation of biotin on its carrier protein (BCCP) and then the CO(2) group is transferred by the carboxyltransferase to acetyl-CoA to form malonyl-CoA. This is Acetyl-coenzyme A carboxylase carboxyl transferase subunit alpha from Afipia carboxidovorans (strain ATCC 49405 / DSM 1227 / KCTC 32145 / OM5) (Oligotropha carboxidovorans).